Reading from the N-terminus, the 279-residue chain is Shikimate dehydrogenase (NADP(+)) (279 aa).

Residues Ser-20 to Ser-22 and Thr-67 contribute to the shikimate site. Catalysis depends on Lys-71, which acts as the Proton acceptor. Residue Asp-83 coordinates NADP(+). 2 residues coordinate shikimate: Asn-92 and Asp-108. Residues Gly-134 to Ala-138 and Leu-223 each bind NADP(+). Shikimate is bound at residue Tyr-225. Gly-246 is a binding site for NADP(+).

Belongs to the shikimate dehydrogenase family. Homodimer.

The enzyme catalyses shikimate + NADP(+) = 3-dehydroshikimate + NADPH + H(+). The protein operates within metabolic intermediate biosynthesis; chorismate biosynthesis; chorismate from D-erythrose 4-phosphate and phosphoenolpyruvate: step 4/7. Its function is as follows. Involved in the biosynthesis of the chorismate, which leads to the biosynthesis of aromatic amino acids. Catalyzes the reversible NADPH linked reduction of 3-dehydroshikimate (DHSA) to yield shikimate (SA). This chain is Shikimate dehydrogenase (NADP(+)), found in Cereibacter sphaeroides (strain ATCC 17029 / ATH 2.4.9) (Rhodobacter sphaeroides).